We begin with the raw amino-acid sequence, 235 residues long: MAATTCFFFLFPFLLLLTLSRAATFEIVNRCSYTVWAAASKGDAALDAGGRQLNSGESWTINVEPGTNGGKIWARTDCYFDDSGSGICKTGDCGGLLRCKRFGRPPTTLAEFSLNQYGKDYIDISNIKGFNVPMDFSPTTRGCRGVRCAADIVGQCPAKLKAPGGGCNDACTVFQTSEYCCTTGKCGPTEYSRFFKRLCPDAFSYVLDKPTTVTCPGSSNYRVTFCPTALELEDE.

The signal sequence occupies residues 1-22; the sequence is MAATTCFFFLFPFLLLLTLSRA. Intrachain disulfides connect C31–C226, C78–C88, C93–C99, C143–C215, C148–C199, C156–C167, C171–C180, and C181–C186. The propeptide at 230 to 235 is removed in mature form; the sequence is LELEDE.

This sequence belongs to the thaumatin family.

The protein localises to the cytoplasmic vesicle. Taste-modifying protein; intensely sweet-tasting. It is 100000 times sweeter than sucrose on a molar basis. In Thaumatococcus daniellii (Katemfe), this protein is Thaumatin I.